Here is a 157-residue protein sequence, read N- to C-terminus: Peptide methionine sulfoxide reductase MsrB (157 aa).

The MsrB domain occupies Asp14 to Leu137. Cys126 (nucleophile) is an active-site residue.

It belongs to the MsrB Met sulfoxide reductase family.

It catalyses the reaction L-methionyl-[protein] + [thioredoxin]-disulfide + H2O = L-methionyl-(R)-S-oxide-[protein] + [thioredoxin]-dithiol. This Deinococcus radiodurans (strain ATCC 13939 / DSM 20539 / JCM 16871 / CCUG 27074 / LMG 4051 / NBRC 15346 / NCIMB 9279 / VKM B-1422 / R1) protein is Peptide methionine sulfoxide reductase MsrB.